Here is a 266-residue protein sequence, read N- to C-terminus: Probable sulfate transport system permease protein cysT (266 aa).

Helical transmembrane passes span isoleucine 12–isoleucine 32, methionine 59–threonine 79, alanine 91–valine 111, isoleucine 129–isoleucine 149, valine 181–alanine 201, glycine 206–isoleucine 226, and leucine 236–isoleucine 256. Positions tyrosine 53–asparagine 257 constitute an ABC transmembrane type-1 domain.

Belongs to the binding-protein-dependent transport system permease family. CysTW subfamily.

Its subcellular location is the plastid. The protein resides in the chloroplast membrane. Part of the ABC transporter complex cysAWTP (TC 3.A.1.6.1) involved in sulfate/thiosulfate import. Probably responsible for the translocation of the substrate across the membrane. The protein is Probable sulfate transport system permease protein cysT (cysT) of Chlorella vulgaris (Green alga).